A 566-amino-acid polypeptide reads, in one-letter code: Cytoplasmic polyadenylation element-binding protein 2 (566 aa).

Disordered stretches follow at residues 17 to 46 (FWGN…SVEG) and 64 to 98 (LERL…IQEQ). Residues 87 to 98 (DSEEEEEDIQEQ) are compositionally biased toward acidic residues. The RRM domain occupies 430 to 512 (MVAFIGGVPR…KRVEIKPYFF (83 aa)).

In terms of biological role, cytoplasmic polyadenylation element binding protein that binds to and regulates the translation of specific mRNAs. The chain is Cytoplasmic polyadenylation element-binding protein 2 (cpb-2) from Caenorhabditis briggsae.